Here is a 654-residue protein sequence, read N- to C-terminus: Fatty acid photodecarboxylase, chloroplastic (654 aa).

Residues 1–62 constitute a chloroplast transit peptide; that stretch reads MASITSRASA…RRGGALSARA (62 aa). Residues 93 to 94, glutamate 114, leucine 162, serine 166, 170 to 173, and valine 298 contribute to the FAD site; these read TA and NATL. Residues cysteine 432, arginine 451, tyrosine 466, and glutamine 486 each coordinate hexadecanoate. Position 622 (glycine 622) interacts with FAD.

It belongs to the GMC oxidoreductase family. It depends on FAD as a cofactor.

The protein resides in the plastid. The protein localises to the chloroplast. It catalyses the reaction a long-chain fatty acid + hnu + H(+) = a long-chain alkane + CO2. The catalysed reaction is hnu + hexadecanoate + H(+) = pentadecane + CO2. The enzyme catalyses hnu + octadecanoate + H(+) = heptadecane + CO2. It carries out the reaction heptadecanoate + hnu + H(+) = hexadecane + CO2. It catalyses the reaction hnu + tetradecanoate + H(+) = tridecane + CO2. The catalysed reaction is octanoate + hnu + H(+) = heptane + CO2. With respect to regulation, activated by blue light and repressed by red light. Its function is as follows. Catalyzes the decarboxylation of free fatty acids to n-alkanes or n-alkenes in response to blue light. Substrate preference is toward fatty acids with C16 or C17 chains. Converts n-octanoic acid (C8 chain) more efficiently than palmitate (n-hexadecanoic acid, C16 chain) into n-heptane (C7 chain) and n-pentadecane (C15 chain), respectively, partly due to an autocatalytic effect of its n-heptane product. Saturated fatty acids are converted to alkanes, not alkenes. The decarboxylation is initiated through electron abstraction from the fatty acid by the photo-excited FAD. The protein is Fatty acid photodecarboxylase, chloroplastic of Chlorella variabilis (Green alga).